Consider the following 163-residue polypeptide: NADH-quinone oxidoreductase subunit I (163 aa).

2 4Fe-4S ferredoxin-type domains span residues 54–84 (LRRY…IDSA) and 94–123 (TRYD…ETHI). Residues Cys64, Cys67, Cys70, Cys74, Cys103, Cys106, Cys109, and Cys113 each coordinate [4Fe-4S] cluster.

This sequence belongs to the complex I 23 kDa subunit family. In terms of assembly, NDH-1 is composed of 14 different subunits. Subunits NuoA, H, J, K, L, M, N constitute the membrane sector of the complex. [4Fe-4S] cluster is required as a cofactor.

The protein localises to the cell inner membrane. It carries out the reaction a quinone + NADH + 5 H(+)(in) = a quinol + NAD(+) + 4 H(+)(out). NDH-1 shuttles electrons from NADH, via FMN and iron-sulfur (Fe-S) centers, to quinones in the respiratory chain. The immediate electron acceptor for the enzyme in this species is believed to be ubiquinone. Couples the redox reaction to proton translocation (for every two electrons transferred, four hydrogen ions are translocated across the cytoplasmic membrane), and thus conserves the redox energy in a proton gradient. This chain is NADH-quinone oxidoreductase subunit I, found in Xanthomonas campestris pv. campestris (strain 8004).